Here is a 746-residue protein sequence, read N- to C-terminus: tRNA(Met) cytidine acetyltransferase TmcA (746 aa).

Residues 181 to 200 form a disordered region; sequence ARAETGGNPPSPGDSACRTE. Residues glutamine 202, 228–237, and arginine 370 each bind ATP; that span reads GRGKSAALGI. Positions 405-617 constitute an N-acetyltransferase domain; sequence VAVERLDRDA…VHLPHQLADP (213 aa). Acetyl-CoA-binding positions include 517-519, 524-530, glutamate 557, and arginine 564; these read IAV and QGQGLGT.

Belongs to the RNA cytidine acetyltransferase family. TmcA subfamily.

The protein resides in the cytoplasm. The enzyme catalyses cytidine(34) in elongator tRNA(Met) + acetyl-CoA + ATP + H2O = N(4)-acetylcytidine(34) in elongator tRNA(Met) + ADP + phosphate + CoA + H(+). Its function is as follows. Catalyzes the formation of N(4)-acetylcytidine (ac(4)C) at the wobble position of tRNA(Met), by using acetyl-CoA as an acetyl donor and ATP (or GTP). The chain is tRNA(Met) cytidine acetyltransferase TmcA from Nitrosococcus halophilus (strain Nc4).